A 113-amino-acid polypeptide reads, in one-letter code: ATP-dependent Clp protease adapter protein ClpS (113 aa).

The span at 1–11 shows a compositional bias: pro residues; it reads MTRPTIPPGPP. 2 disordered regions span residues 1–24 and 92–113; these read MTRPTIPPGPPGAEGRTQTLERTE and TAHAQREGHPLRVVAEPESEGE.

Belongs to the ClpS family. In terms of assembly, binds to the N-terminal domain of the chaperone ClpA.

Its function is as follows. Involved in the modulation of the specificity of the ClpAP-mediated ATP-dependent protein degradation. The protein is ATP-dependent Clp protease adapter protein ClpS of Deinococcus radiodurans (strain ATCC 13939 / DSM 20539 / JCM 16871 / CCUG 27074 / LMG 4051 / NBRC 15346 / NCIMB 9279 / VKM B-1422 / R1).